The primary structure comprises 124 residues: Bactoprenol-linked glucose translocase (124 aa).

4 helical membrane-spanning segments follow: residues 12 to 32, 45 to 65, 75 to 95, and 96 to 116; these read FFSY…VFYA, NIVG…RCSF, FIFI…FDLL, and ALSP…LGYC.

This sequence belongs to the GtrA family.

Its subcellular location is the cell membrane. It functions in the pathway bacterial outer membrane biogenesis; lipopolysaccharide biosynthesis. Functionally, involved in O antigen modification. Involved in the translocation of bactoprenol-linked glucose across the cytoplasmic membrane. This is Bactoprenol-linked glucose translocase (rfbI) from Shigella flexneri.